A 1274-amino-acid polypeptide reads, in one-letter code: DENN domain-containing protein 5B (1274 aa).

N-acetylserine is present on Ser-2. In terms of domain architecture, uDENN spans 39–244; the sequence is DELAGENFDQ…EVPLPPPGRS (206 aa). Ser-49 and Ser-178 each carry phosphoserine. Positions 263–399 constitute a cDENN domain; it reads ELPLSDYPLR…VDFIQELSEV (137 aa). The 181-residue stretch at 401 to 581 folds into the dDENN domain; that stretch reads LQFGIPPEGS…DNKIMSQWEE (181 aa). The region spanning 772–932 is the RUN 1 domain; the sequence is LEENTLIASL…DYFCFTSVFT (161 aa). Phosphoserine is present on Ser-822. The chain crosses the membrane as a helical span at residues 916–936; sequence LLSLNAVDYFCFTSVFTTIMI. One can recognise a PLAT domain in the interval 936-1044; it reads IPYRSVIIPI…DDGSLERILI (109 aa). A Phosphothreonine modification is found at Thr-1062. Ser-1068, Ser-1076, and Ser-1079 each carry phosphoserine. Residues 1118-1267 form the RUN 2 domain; sequence TVLLCGENGL…QDFTIVLEGS (150 aa).

This sequence belongs to the RAB6IP1 family.

Its subcellular location is the membrane. In terms of biological role, guanine nucleotide exchange factor (GEF) which may activate RAB39A and/or RAB39B. Promotes the exchange of GDP to GTP, converting inactive GDP-bound Rab proteins into their active GTP-bound form. This chain is DENN domain-containing protein 5B (Dennd5b), found in Mus musculus (Mouse).